The primary structure comprises 343 residues: Fructose-bisphosphate aldolase (343 aa).

Ser53 is a D-glyceraldehyde 3-phosphate binding site. Asp95 (proton donor) is an active-site residue. Residues His96, Asp131, Glu161, and His212 each coordinate Zn(2+). A dihydroxyacetone phosphate-binding site is contributed by Gly213. Zn(2+) is bound at residue His252. Dihydroxyacetone phosphate is bound by residues 253–255 (GGS) and 274–277 (NIDT).

It belongs to the class II fructose-bisphosphate aldolase family. It depends on Zn(2+) as a cofactor.

The enzyme catalyses beta-D-fructose 1,6-bisphosphate = D-glyceraldehyde 3-phosphate + dihydroxyacetone phosphate. The protein operates within carbohydrate degradation; glycolysis; D-glyceraldehyde 3-phosphate and glycerone phosphate from D-glucose: step 4/4. Functionally, catalyzes the aldol condensation of dihydroxyacetone phosphate (DHAP or glycerone-phosphate) with glyceraldehyde 3-phosphate (G3P) to form fructose 1,6-bisphosphate (FBP) in gluconeogenesis and the reverse reaction in glycolysis. The protein is Fructose-bisphosphate aldolase (fba) of Streptomyces coelicolor (strain ATCC BAA-471 / A3(2) / M145).